The chain runs to 159 residues: Transcriptional repressor NrdR (159 aa).

A zinc finger spans residues 3-34 (CPYCQSEDTQVKDSRPAEDGAAIRRRRVCPDC). Residues 49-139 (LVVVKKSGRK…VYRNFREAKD (91 aa)) form the ATP-cone domain.

This sequence belongs to the NrdR family. It depends on Zn(2+) as a cofactor.

In terms of biological role, negatively regulates transcription of bacterial ribonucleotide reductase nrd genes and operons by binding to NrdR-boxes. The protein is Transcriptional repressor NrdR of Mesorhizobium japonicum (strain LMG 29417 / CECT 9101 / MAFF 303099) (Mesorhizobium loti (strain MAFF 303099)).